The sequence spans 2718 residues: Zinc finger protein 40 (2718 aa).

Disordered stretches follow at residues 58-182 (HLKK…CISS), 210-256 (LSQK…AESQ), and 335-373 (GLTSPSSRSQVTPQNQQMDSASPLSISPANSTQSPPMPI). A Phosphoserine modification is found at serine 141. Over residues 142–158 (ELRRWRSEGADPAKFSD) the composition is skewed to basic and acidic residues. 2 stretches are compositionally biased toward polar residues: residues 164–182 (DSSSLSSKTRTDNSECISS) and 237–256 (KNSSMDAPNQTSQELVAESQ). A C2H2-type 1 zinc finger spans residues 406-428 (YICEYCNRACAKPSVLLKHIRSH). A Phosphothreonine modification is found at threonine 429. The C2H2-type 2 zinc-finger motif lies at 434–456 (YPCVTCGFSFKTKSNLYKHKKSH). Phosphoserine occurs at positions 476, 479, 492, 495, 571, and 577. The interval 484 to 511 (SIHSDVEDSGESEEEGATDERQHDLGAM) is disordered. Over residues 490 to 500 (EDSGESEEEGA) the composition is skewed to acidic residues. Residues 574–727 (RTDSPKAMDP…TPSALPTGEK (154 aa)) form a disordered region. Residues 576–585 (DSPKAMDPKP) show a composition bias toward basic and acidic residues. Residues 588–612 (SSAQKQKDLQVTNVQPLSANMSQGG) are compositionally biased toward polar residues. The segment covering 617 to 626 (ETNENSHQKG) has biased composition (basic and acidic residues). Composition is skewed to polar residues over residues 644–687 (AQLQ…QTVS) and 698–721 (STEQDSGRSNGPSAALVTTSTPSA). 2 positions are modified to phosphoserine: serine 670 and serine 681. The segment at 956–986 (GTMFECETCRNRYRKLENFENHKKFYCSELH) adopts a CCHC HIVEP-type zinc-finger fold. The disordered stretch occupies residues 1022–1062 (WEQTPQIRKRRKMKSVGDDEELQQNESGTSPKSSEGLQFQN). A phosphoserine mark is found at serine 1036, serine 1051, serine 1091, serine 1158, serine 1161, and serine 1180. Polar residues predominate over residues 1045 to 1062 (QNESGTSPKSSEGLQFQN). The disordered stretch occupies residues 1138–1169 (HTNSLSRPNSFDKPEPFERASPVSFQELNRTG). Over residues 1160–1169 (VSFQELNRTG) the composition is skewed to polar residues. Composition is skewed to basic and acidic residues over residues 1202–1219 (LRGELQESSRKSPSERHV) and 1246–1259 (DLEAQCHDQEKSEK). Disordered stretches follow at residues 1202–1282 (LRGE…PKKK), 1384–1414 (RSKSFDCGSITPPQTTPLTELQPPSSPSRVG), and 1523–1548 (SHQSTQLSLQVSTQGSKPDKNSVLSG). Threonine 1268 is subject to Phosphothreonine. Low complexity-rich tracts occupy residues 1394–1406 (TPPQTTPLTELQP) and 1523–1536 (SHQSTQLSLQVSTQ). Residues serine 1735, serine 1740, serine 1749, and serine 1753 each carry the phosphoserine modification. Polar residues predominate over residues 1871 to 1883 (VRSSPAPSENTHI). The segment at 1871-1911 (VRSSPAPSENTHISPLKCTDNNQERKSPGVKNQGDKVNIQE) is disordered. Phosphoserine occurs at positions 1884 and 2033. 2 consecutive C2H2-type zinc fingers follow at residues 2088–2110 (YICEECGIRCKKPSMLKKHIRTH) and 2116–2140 (YHCTYCNFSFKTKGNLTKHMKSKAH). 4 disordered regions span residues 2155 to 2228 (DEQD…PVST), 2265 to 2303 (SDYNRKTLSPGKARQRAARDENDTIPSVDTSRSPCHQMS), 2327 to 2381 (SPSS…THLF), and 2572 to 2718 (PASQ…VIAT). Positions 2164–2175 (EKQRFSYERSGY) are enriched in basic and acidic residues. Acidic residues predominate over residues 2176–2198 (DLEESDGPDEDDNENEDDDEDSQ). Composition is skewed to polar residues over residues 2199-2226 (AESVLSATPSVTASPQHLPSRSSLQDPV) and 2288-2300 (TIPSVDTSRSPCH). 2 positions are modified to phosphoserine: serine 2327 and serine 2599. Residues 2573–2608 (ASQSKACETQPKQTSVASANQVSRTESPQGLPTVQR) show a composition bias toward polar residues. Over residues 2623–2637 (DHARLDGLSKMDTEK) the composition is skewed to basic and acidic residues. The segment covering 2651–2663 (TSIQGQPASTSQP) has biased composition (polar residues). Serine 2669 and serine 2682 each carry phosphoserine.

Interacts with UTP4.

Its subcellular location is the nucleus. The protein localises to the cytoplasm. Functionally, this protein specifically binds to the DNA sequence 5'-GGGACTTTCC-3' which is found in the enhancer elements of numerous viral promoters such as those of SV40, CMV, or HIV-1. In addition, related sequences are found in the enhancer elements of a number of cellular promoters, including those of the class I MHC, interleukin-2 receptor, and interferon-beta genes. It may act in T-cell activation. Involved in activating HIV-1 gene expression. Isoform 2 and isoform 3 also bind to the IPCS (IRF1 and p53 common sequence) DNA sequence in the promoter region of interferon regulatory factor 1 and p53 genes and are involved in transcription regulation of these genes. Isoform 2 does not activate HIV-1 gene expression. Isoform 2 and isoform 3 may be involved in apoptosis. The sequence is that of Zinc finger protein 40 (HIVEP1) from Homo sapiens (Human).